Consider the following 529-residue polypeptide: Autophagy-related protein 21 (529 aa).

The span at 49 to 62 shows a compositional bias: polar residues; it reads NSLEDSAGCQNPTH. The segment at 49 to 70 is disordered; that stretch reads NSLEDSAGCQNPTHSKTDSQDT. 2 WD repeats span residues 271–311 and 321–361; these read AHHS…GKVK and GHNL…SDIC. The short motif at 318–322 is the L/FRRG motif element; the sequence is LRRGH. The segment at 362–388 is disordered; that stretch reads TNENSEDRTNHNSDYEDSDGDTSKSSE. The segment covering 366–375 has biased composition (basic and acidic residues); sequence SEDRTNHNSD.

Belongs to the WD repeat PROPPIN family.

The protein localises to the cytoplasm. The protein resides in the membrane. It localises to the vacuole membrane. In terms of biological role, required for cytoplasm to vacuole transport (Cvt) vesicles formation and mitophagy. Involved in binding of phosphatidylethanolamine to ATG8 and in recruitment of ATG8 and ATG5 to the pre-autophagosomal structure. Protects ATG8 from ARG4-mediated cleavage. This Candida albicans (strain SC5314 / ATCC MYA-2876) (Yeast) protein is Autophagy-related protein 21 (ATG21).